Reading from the N-terminus, the 659-residue chain is UvrABC system protein B (659 aa).

The Helicase ATP-binding domain occupies 25-412; sequence QSIENGNRGQ…SEIVAEQIIR (388 aa). 38–45 contacts ATP; that stretch reads GVTGSGKT. Residues 91–114 carry the Beta-hairpin motif; the sequence is YYDYYQPEAYVPQTDTFIEKDASI. A Helicase C-terminal domain is found at 429 to 582; that stretch reads QIDDLYGEIQ…QMEYNEEHNI (154 aa). In terms of domain architecture, UVR spans 622-657; sequence EKLIEQYEEEMKEAAKNLQFERAAELRDIIKDLKEN.

This sequence belongs to the UvrB family. As to quaternary structure, forms a heterotetramer with UvrA during the search for lesions. Interacts with UvrC in an incision complex.

The protein localises to the cytoplasm. Its function is as follows. The UvrABC repair system catalyzes the recognition and processing of DNA lesions. A damage recognition complex composed of 2 UvrA and 2 UvrB subunits scans DNA for abnormalities. Upon binding of the UvrA(2)B(2) complex to a putative damaged site, the DNA wraps around one UvrB monomer. DNA wrap is dependent on ATP binding by UvrB and probably causes local melting of the DNA helix, facilitating insertion of UvrB beta-hairpin between the DNA strands. Then UvrB probes one DNA strand for the presence of a lesion. If a lesion is found the UvrA subunits dissociate and the UvrB-DNA preincision complex is formed. This complex is subsequently bound by UvrC and the second UvrB is released. If no lesion is found, the DNA wraps around the other UvrB subunit that will check the other stand for damage. This chain is UvrABC system protein B, found in Clostridium perfringens (strain 13 / Type A).